The primary structure comprises 447 residues: Secretin receptor (447 aa).

Positions 1–28 (MLSTMSPRLSLLLLWLLLLINAAHPVGA) are cleaved as a signal peptide. The Extracellular segment spans residues 29 to 140 (LPRLCDVRRV…NERRHAYLLK (112 aa)). Disulfide bonds link Cys-46/Cys-74, Cys-65/Cys-106, and Cys-88/Cys-122. N-linked (GlcNAc...) asparagine glycosylation is found at Asn-71, Asn-99, Asn-105, and Asn-127. The chain crosses the membrane as a helical span at residues 141–166 (LKVMYTVGYSSSLAMLLVALSILCSF). Topologically, residues 167–173 (RRLHCTR) are cytoplasmic. Residues 174 to 194 (NYIHMHLFVSFILRALSNFIK) traverse the membrane as a helical segment. The Extracellular portion of the chain corresponds to 195–215 (DAVLFPADDVTYCDAHRAGCK). Cys-214 and Cys-284 are oxidised to a cystine. The helical transmembrane segment at 216–238 (LVMIFFQYCIMANYAWLLVEGLY) threads the bilayer. The Cytoplasmic portion of the chain corresponds to 239–253 (LHTLLAISFFSERKC). Residues 254–275 (LQAFVLFGWGSPAIFVALWAVT) form a helical membrane-spanning segment. At 276-290 (RHFLEDFGCWDINSN) the chain is on the extracellular side. A glycan (N-linked (GlcNAc...) asparagine) is linked at Asn-290. A helical transmembrane segment spans residues 291-314 (ASIWWVIRGPVILSIVINFIFFIN). Topologically, residues 315–339 (ILRILMRKLRTQETRGNETHHYKRL) are cytoplasmic. A helical membrane pass occupies residues 340 to 355 (AKSTLLLIPLFGIHYI). At 356-366 (VFAFSPEGAME) the chain is on the extracellular side. Residues 367-390 (VQLFFELALGSFQGLVVAVLYCFL) form a helical membrane-spanning segment. Residues 391 to 447 (NGELEVQKKWRQWHLQEFPLRPVALSNSFSNATNGPTHSTKAGTSEQSRSIPGANVI) lie on the Cytoplasmic side of the membrane. A compositionally biased stretch (polar residues) spans 423-440 (TNGPTHSTKAGTSEQSRS). Residues 423–447 (TNGPTHSTKAGTSEQSRSIPGANVI) are disordered.

Belongs to the G-protein coupled receptor 2 family. Phosphorylated on Ser and Thr residues at the cytoplasmic C-terminus by G protein-coupled receptor kinases (GRKs). As to expression, in brain, expressed in the hippocampal CA1 region, the lower layer of cerebral cortex, the anterior olfactory nuclei, the anterior ventrolateral thalamus, the lateral region of hypothalamus, substantia nigra, tegmental area and central nucleus of the inferior colliculus, the ventral supramamillary nucleus and the cerebellum. Expressed in brown adipocytes: expression predominates in mature brown adipocytes (at protein level). Detected in the renal medulla, where it localized predominantly on the basolateral membranes of cells in the collecting ducts (blue arrow) and the ascending thick segments of the loop of Henle.

The protein resides in the cell membrane. It localises to the basolateral cell membrane. Functionally, g protein-coupled receptor activated by secretin (SCT), which is involved in different processes such as regulation of the pH of the duodenal content, food intake and water homeostasis. Ligand binding causes a conformation change that triggers signaling via guanine nucleotide-binding proteins (G proteins) and activates cAMP-dependent pathway. Upon binding to secretin, regulates the pH of the duodenum by (1) inhibiting the secretion of gastric acid from the parietal cells of the stomach and (2) stimulating the production of bicarbonate (NaHCO(3)) from the ductal cells of the pancreas. In addition to regulating the pH of the duodenal content, plays a central role in diet induced thermogenesis: acts as a non-sympathetic brown fat (BAT) activator mediating prandial thermogenesis, which consequentially induces satiation. Mechanistically, secretin released by the gut after a meal binds to secretin receptor (SCTR) in brown adipocytes, activating brown fat thermogenesis by stimulating lipolysis, which is sensed in the brain and promotes satiation. Also able to stimulate lipolysis in white adipocytes. Also plays an important role in cellular osmoregulation by regulating renal water reabsorption. Also plays a role in the central nervous system: required for synaptic plasticity. The chain is Secretin receptor from Mus musculus (Mouse).